The sequence spans 297 residues: Probable endonuclease 4 (297 aa).

The Zn(2+) site is built by His-69, His-110, Glu-145, Asp-179, His-182, His-214, Asp-227, His-229, and Glu-259.

It belongs to the AP endonuclease 2 family. Zn(2+) serves as cofactor.

The catalysed reaction is Endonucleolytic cleavage to 5'-phosphooligonucleotide end-products.. Functionally, endonuclease IV plays a role in DNA repair. It cleaves phosphodiester bonds at apurinic or apyrimidinic (AP) sites, generating a 3'-hydroxyl group and a 5'-terminal sugar phosphate. This Bacillus licheniformis (strain ATCC 14580 / DSM 13 / JCM 2505 / CCUG 7422 / NBRC 12200 / NCIMB 9375 / NCTC 10341 / NRRL NRS-1264 / Gibson 46) protein is Probable endonuclease 4.